Here is a 316-residue protein sequence, read N- to C-terminus: 4-hydroxy-3-methylbut-2-enyl diphosphate reductase (316 aa).

Residue cysteine 12 participates in [4Fe-4S] cluster binding. Residues histidine 41 and histidine 74 each contribute to the (2E)-4-hydroxy-3-methylbut-2-enyl diphosphate site. 2 residues coordinate dimethylallyl diphosphate: histidine 41 and histidine 74. Isopentenyl diphosphate contacts are provided by histidine 41 and histidine 74. A [4Fe-4S] cluster-binding site is contributed by cysteine 96. A (2E)-4-hydroxy-3-methylbut-2-enyl diphosphate-binding site is contributed by histidine 124. Position 124 (histidine 124) interacts with dimethylallyl diphosphate. Position 124 (histidine 124) interacts with isopentenyl diphosphate. Glutamate 126 serves as the catalytic Proton donor. Position 169 (threonine 169) interacts with (2E)-4-hydroxy-3-methylbut-2-enyl diphosphate. Cysteine 199 is a [4Fe-4S] cluster binding site. 4 residues coordinate (2E)-4-hydroxy-3-methylbut-2-enyl diphosphate: serine 227, serine 228, asparagine 229, and serine 271. Residues serine 227, serine 228, asparagine 229, and serine 271 each coordinate dimethylallyl diphosphate. Isopentenyl diphosphate contacts are provided by serine 227, serine 228, asparagine 229, and serine 271.

The protein belongs to the IspH family. It depends on [4Fe-4S] cluster as a cofactor.

It carries out the reaction isopentenyl diphosphate + 2 oxidized [2Fe-2S]-[ferredoxin] + H2O = (2E)-4-hydroxy-3-methylbut-2-enyl diphosphate + 2 reduced [2Fe-2S]-[ferredoxin] + 2 H(+). The enzyme catalyses dimethylallyl diphosphate + 2 oxidized [2Fe-2S]-[ferredoxin] + H2O = (2E)-4-hydroxy-3-methylbut-2-enyl diphosphate + 2 reduced [2Fe-2S]-[ferredoxin] + 2 H(+). It participates in isoprenoid biosynthesis; dimethylallyl diphosphate biosynthesis; dimethylallyl diphosphate from (2E)-4-hydroxy-3-methylbutenyl diphosphate: step 1/1. Its pathway is isoprenoid biosynthesis; isopentenyl diphosphate biosynthesis via DXP pathway; isopentenyl diphosphate from 1-deoxy-D-xylulose 5-phosphate: step 6/6. In terms of biological role, catalyzes the conversion of 1-hydroxy-2-methyl-2-(E)-butenyl 4-diphosphate (HMBPP) into a mixture of isopentenyl diphosphate (IPP) and dimethylallyl diphosphate (DMAPP). Acts in the terminal step of the DOXP/MEP pathway for isoprenoid precursor biosynthesis. This chain is 4-hydroxy-3-methylbut-2-enyl diphosphate reductase, found in Stenotrophomonas maltophilia (strain K279a).